Here is a 187-residue protein sequence, read N- to C-terminus: Proenkephalin-A (187 aa).

Propeptides lie at residues Met52 to Ala70, Asp80 to Gln143, Val153 to Gln163, and Phe173 to Ser187. The interval Ala81–Ser132 is disordered. Residues Leu88–Leu99 show a composition bias toward low complexity. A compositionally biased stretch (basic and acidic residues) spans Arg111–Lys120. Ser187 carries the phosphoserine modification.

It belongs to the opioid neuropeptide precursor family. In terms of processing, processed and degraded by ACE. Post-translationally, the N-terminal domain contains 6 conserved cysteines thought to be involved in disulfide bonding and/or processing. Proenkephalin-A is cleaved by CTSL to generate Met-enkephalin.

Its subcellular location is the cytoplasmic vesicle. It localises to the secretory vesicle. It is found in the chromaffin granule lumen. The protein localises to the secreted. Its function is as follows. Neuropeptide that competes with and mimic the effects of opiate drugs. They play a role in a number of physiologic functions, including pain perception and responses to stress. This Felis catus (Cat) protein is Proenkephalin-A (PENK).